Reading from the N-terminus, the 454-residue chain is Bifunctional protein GlmU (454 aa).

Residues 1-226 (MSTTVIILAA…AFEVEGVNDR (226 aa)) form a pyrophosphorylase region. Residues 8–11 (LAAG), lysine 22, glutamine 73, 78–79 (GT), 100–102 (YGD), glycine 137, glutamate 151, asparagine 166, and asparagine 224 each bind UDP-N-acetyl-alpha-D-glucosamine. Position 102 (aspartate 102) interacts with Mg(2+). Asparagine 224 is a binding site for Mg(2+). The linker stretch occupies residues 227 to 247 (LQLAALEREFQKQQAKELMQQ). Positions 248–454 (GVTFADPARF…NYQRPQKLKK (207 aa)) are N-acetyltransferase. UDP-N-acetyl-alpha-D-glucosamine-binding residues include arginine 330 and lysine 348. Histidine 360 serves as the catalytic Proton acceptor. UDP-N-acetyl-alpha-D-glucosamine is bound by residues tyrosine 363 and asparagine 374. Acetyl-CoA-binding positions include alanine 377, 383 to 384 (NY), serine 402, alanine 420, and arginine 437.

In the N-terminal section; belongs to the N-acetylglucosamine-1-phosphate uridyltransferase family. The protein in the C-terminal section; belongs to the transferase hexapeptide repeat family. In terms of assembly, homotrimer. Requires Mg(2+) as cofactor.

It localises to the cytoplasm. The enzyme catalyses alpha-D-glucosamine 1-phosphate + acetyl-CoA = N-acetyl-alpha-D-glucosamine 1-phosphate + CoA + H(+). It carries out the reaction N-acetyl-alpha-D-glucosamine 1-phosphate + UTP + H(+) = UDP-N-acetyl-alpha-D-glucosamine + diphosphate. Its pathway is nucleotide-sugar biosynthesis; UDP-N-acetyl-alpha-D-glucosamine biosynthesis; N-acetyl-alpha-D-glucosamine 1-phosphate from alpha-D-glucosamine 6-phosphate (route II): step 2/2. It participates in nucleotide-sugar biosynthesis; UDP-N-acetyl-alpha-D-glucosamine biosynthesis; UDP-N-acetyl-alpha-D-glucosamine from N-acetyl-alpha-D-glucosamine 1-phosphate: step 1/1. The protein operates within bacterial outer membrane biogenesis; LPS lipid A biosynthesis. In terms of biological role, catalyzes the last two sequential reactions in the de novo biosynthetic pathway for UDP-N-acetylglucosamine (UDP-GlcNAc). The C-terminal domain catalyzes the transfer of acetyl group from acetyl coenzyme A to glucosamine-1-phosphate (GlcN-1-P) to produce N-acetylglucosamine-1-phosphate (GlcNAc-1-P), which is converted into UDP-GlcNAc by the transfer of uridine 5-monophosphate (from uridine 5-triphosphate), a reaction catalyzed by the N-terminal domain. The polypeptide is Bifunctional protein GlmU (Acinetobacter baumannii (strain ACICU)).